Here is an 873-residue protein sequence, read N- to C-terminus: Bifunctional uridylyltransferase/uridylyl-removing enzyme (873 aa).

The tract at residues 1 to 332 is uridylyltransferase; it reads MKYLSPLSLS…HQGEQDDAII (332 aa). The uridylyl-removing stretch occupies residues 333-692; the sequence is IDDDFQRRGR…ISKNASRGGT (360 aa). Residues 451 to 573 form the HD domain; that stretch reads VDEHSIRLLK…VRDEERLDYL (123 aa). ACT domains follow at residues 693–777 and 800–873; these read EIFV…RPPR and LMEF…RLSS.

This sequence belongs to the GlnD family. Requires Mg(2+) as cofactor.

It catalyses the reaction [protein-PII]-L-tyrosine + UTP = [protein-PII]-uridylyl-L-tyrosine + diphosphate. The enzyme catalyses [protein-PII]-uridylyl-L-tyrosine + H2O = [protein-PII]-L-tyrosine + UMP + H(+). With respect to regulation, uridylyltransferase (UTase) activity is inhibited by glutamine, while glutamine activates uridylyl-removing (UR) activity. In terms of biological role, modifies, by uridylylation and deuridylylation, the PII regulatory proteins (GlnB and homologs), in response to the nitrogen status of the cell that GlnD senses through the glutamine level. Under low glutamine levels, catalyzes the conversion of the PII proteins and UTP to PII-UMP and PPi, while under higher glutamine levels, GlnD hydrolyzes PII-UMP to PII and UMP (deuridylylation). Thus, controls uridylylation state and activity of the PII proteins, and plays an important role in the regulation of nitrogen assimilation and metabolism. This Aliivibrio fischeri (strain ATCC 700601 / ES114) (Vibrio fischeri) protein is Bifunctional uridylyltransferase/uridylyl-removing enzyme.